Consider the following 309-residue polypeptide: MKLVLFLNMGGATNLQDCEVFLKNMFNDPYILGIKNRFLRKFVAWIITKARVKAMQENYKKMGGKSPLNELTQSLCNKLNLKQDEFKFDFVNLYVPPFATEILQKYTLNESDEIILFPLYPHHSCTTVTSSLEVLQNEISKQKIQAKVKTIDIFYKNELYNEMIVSHILAKKSKFDAKILIFSAHSLPQSIIDKGDLYEKHVNDHVEILKEKLKDHFDEFILAYQSKLGPVKWLEPNTSDVLANLNDKALIYPISFCIDCSETIFELGMEYKHLAKCDYDLISCPNDSDEFMEFILNSINSPLARKTSC.

The Fe cation site is built by His-185 and Glu-262.

This sequence belongs to the ferrochelatase family.

The protein localises to the cytoplasm. The catalysed reaction is heme b + 2 H(+) = protoporphyrin IX + Fe(2+). The protein operates within porphyrin-containing compound metabolism; protoheme biosynthesis; protoheme from protoporphyrin-IX: step 1/1. Functionally, catalyzes the ferrous insertion into protoporphyrin IX. The sequence is that of Ferrochelatase from Campylobacter jejuni subsp. jejuni serotype O:6 (strain 81116 / NCTC 11828).